Reading from the N-terminus, the 387-residue chain is MPATPDALSIARDLLRCPSVTPADAGALDVLDRLLRGAGFEVHRVTFSEPGAADIDNLYARIGTGAPHLMFAGHTDVVPPGDVSAWSHGAFAGEVADGQLYGRGAVDMKGGIACAVAAVLVYLAACGGQPKGSISFLITGDEEDIAVNGTVKLLQWADARGENFDHCIVGEPSNVEELGDCIKIGRRGSLSGTLIVDGVQGHVAYPQRAVNPVPDIATLIVALSHEPLDHGTAQFQPSNLEFTSVDVGNAATNVIPAQARAKFNIRFNDQHSIKSLQALIEHHLAAACGNRIRARIEWLPSNAGAFVTKPGPFTDLVTAAIEQVTGRRPELNTGGGTSDARFITHYCPVIEFGLVGQTMHKVDERTPVSDLEKLTAIYRGVLERYFA.

His74 is a Zn(2+) binding site. The active site involves Asp76. Position 107 (Asp107) interacts with Zn(2+). The active-site Proton acceptor is Glu142. Zn(2+) is bound by residues Glu143, Glu171, and His360.

It belongs to the peptidase M20A family. DapE subfamily. As to quaternary structure, homodimer. It depends on Zn(2+) as a cofactor. Requires Co(2+) as cofactor.

It catalyses the reaction N-succinyl-(2S,6S)-2,6-diaminopimelate + H2O = (2S,6S)-2,6-diaminopimelate + succinate. Its pathway is amino-acid biosynthesis; L-lysine biosynthesis via DAP pathway; LL-2,6-diaminopimelate from (S)-tetrahydrodipicolinate (succinylase route): step 3/3. In terms of biological role, catalyzes the hydrolysis of N-succinyl-L,L-diaminopimelic acid (SDAP), forming succinate and LL-2,6-diaminopimelate (DAP), an intermediate involved in the bacterial biosynthesis of lysine and meso-diaminopimelic acid, an essential component of bacterial cell walls. The protein is Succinyl-diaminopimelate desuccinylase of Rhodopseudomonas palustris (strain BisA53).